A 389-amino-acid chain; its full sequence is Xylose isomerase (389 aa).

Residues His54 and Asp57 contribute to the active site. Positions 181, 217, 220, 245, 255, 257, and 287 each coordinate Mg(2+).

The protein belongs to the xylose isomerase family. As to quaternary structure, homotetramer. Mg(2+) serves as cofactor.

Its subcellular location is the cytoplasm. The catalysed reaction is alpha-D-xylose = alpha-D-xylulofuranose. In terms of biological role, involved in D-xylose catabolism. This Streptomyces violaceusniger protein is Xylose isomerase (xylA).